Reading from the N-terminus, the 314-residue chain is Oxaloacetate tautomerase FAHD2B, mitochondrial (314 aa).

A mitochondrion-targeting transit peptide spans 1–84 (MLVSGRRRLL…ATLSVARRAL (84 aa)). 3 residues coordinate Mg(2+): E159, E161, and D190.

This sequence belongs to the FAH family. The cofactor is Mg(2+). Mn(2+) is required as a cofactor.

It localises to the mitochondrion. The catalysed reaction is oxaloacetate = enol-oxaloacetate. Functionally, tautomerase that converts enol-oxaloacetate, a strong inhibitor of succinate dehydrogenase, to the physiological keto form of oxaloacetate. It is thereby required to maximize aerobic respiration efficiency by preventing succinate dehydrogenase inhibition. This Homo sapiens (Human) protein is Oxaloacetate tautomerase FAHD2B, mitochondrial.